Reading from the N-terminus, the 307-residue chain is Zygote arrest protein 2.L (307 aa).

The tract at residues 138–200 (LPQGGRLPKK…EEPGNEEQTK (63 aa)) is disordered. Positions 156-186 (LKERAPSPEDKEREKVSEKEPDTKDELEKRP) are enriched in basic and acidic residues. The 3CxxC-type zinc-finger motif lies at 208-293 (QKYGYFHCKD…QELCGRCKNK (86 aa)).

The protein belongs to the ZAR1 family. Expressed in oocytes.

It is found in the cytoplasm. Its subcellular location is the cytoplasmic ribonucleoprotein granule. In terms of biological role, mRNA-binding protein required for maternal mRNA storage, translation and degradation during oocyte maturation. Probably promotes formation of some phase-separated membraneless compartment that stores maternal mRNAs in oocytes: acts by undergoing liquid-liquid phase separation upon binding to maternal mRNAs. Binds to the 3'-UTR of maternal mRNAs, inhibiting their translation. The chain is Zygote arrest protein 2.L (zar2.L) from Xenopus laevis (African clawed frog).